Consider the following 272-residue polypeptide: Tryptophan synthase alpha chain (272 aa).

Catalysis depends on proton acceptor residues glutamate 49 and glutamate 60.

Belongs to the TrpA family. As to quaternary structure, tetramer of two alpha and two beta chains.

It carries out the reaction (1S,2R)-1-C-(indol-3-yl)glycerol 3-phosphate + L-serine = D-glyceraldehyde 3-phosphate + L-tryptophan + H2O. It functions in the pathway amino-acid biosynthesis; L-tryptophan biosynthesis; L-tryptophan from chorismate: step 5/5. The alpha subunit is responsible for the aldol cleavage of indoleglycerol phosphate to indole and glyceraldehyde 3-phosphate. In Legionella pneumophila (strain Paris), this protein is Tryptophan synthase alpha chain.